A 265-amino-acid chain; its full sequence is Ubiquinone biosynthesis protein COQ4 homolog, mitochondrial (265 aa).

The transit peptide at 1-30 directs the protein to the mitochondrion; the sequence is MATLLRPVLRRLCGLPGLQRPAAEMPLRAR. At serine 108 the chain carries Phosphoserine. 4 residues coordinate Zn(2+): histidine 163, aspartate 164, histidine 167, and glutamate 179.

The protein belongs to the COQ4 family. As to quaternary structure, component of a multi-subunit COQ enzyme complex, composed of at least COQ3, COQ4, COQ5, COQ6, COQ7 and COQ9. Zn(2+) is required as a cofactor. As to expression, expressed ubiquitously, but at high levels in liver, lung and pancreas.

It localises to the mitochondrion inner membrane. The catalysed reaction is 4-hydroxy-3-methoxy-5-(all-trans-decaprenyl)benzoate + H(+) = 2-methoxy-6-(all-trans-decaprenyl)phenol + CO2. It participates in cofactor biosynthesis; ubiquinone biosynthesis. Its function is as follows. Lyase that catalyzes the C1-decarboxylation of 4-hydroxy-3-methoxy-5-(all-trans-decaprenyl)benzoic acid into 2-methoxy-6-(all-trans-decaprenyl)phenol during ubiquinone biosynthesis. The polypeptide is Ubiquinone biosynthesis protein COQ4 homolog, mitochondrial (Homo sapiens (Human)).